A 485-amino-acid chain; its full sequence is Hemolysin (485 aa).

The signal sequence occupies residues 1 to 28; it reads MKNFKGRKFLTCVLVSLCTLNYSSISFA. Beta stranded transmembrane passes span 196-209, 216-225, 294-303, and 311-323; these read KAQIASALNVNAKY, IDFNAVANGE, SKDVQAAFKA, and ETSGQYKDIFEES. Positions 465 to 475 match the Conserved undecapeptide motif; the sequence is ECTGLAWEWWR.

The protein belongs to the cholesterol-dependent cytolysin family. Homooligomeric pore complex of 35 to 50 subunits; when inserted in the host membrane.

Its subcellular location is the secreted. It localises to the host cell membrane. A cholesterol-dependent toxin with hemolytic activity against host red blood cells. Causes cytolysis by forming pores in cholesterol containing host membranes. binding to target membranes, the protein undergoes a major conformation change, leading to its insertion in the host membrane and formation of an oligomeric pore complex. Cholesterol is required for binding to host membranes, membrane insertion and pore formation; cholesterol binding is mediated by a Thr-Leu pair in the C-terminus. Can be reversibly inactivated by oxidation. This Bacillus cereus protein is Hemolysin.